Consider the following 273-residue polypeptide: Putative pyruvate, phosphate dikinase regulatory protein (273 aa).

153 to 160 (GVSRTSKT) provides a ligand contact to ADP.

The protein belongs to the pyruvate, phosphate/water dikinase regulatory protein family. PDRP subfamily.

It carries out the reaction N(tele)-phospho-L-histidyl/L-threonyl-[pyruvate, phosphate dikinase] + ADP = N(tele)-phospho-L-histidyl/O-phospho-L-threonyl-[pyruvate, phosphate dikinase] + AMP + H(+). The enzyme catalyses N(tele)-phospho-L-histidyl/O-phospho-L-threonyl-[pyruvate, phosphate dikinase] + phosphate + H(+) = N(tele)-phospho-L-histidyl/L-threonyl-[pyruvate, phosphate dikinase] + diphosphate. In terms of biological role, bifunctional serine/threonine kinase and phosphorylase involved in the regulation of the pyruvate, phosphate dikinase (PPDK) by catalyzing its phosphorylation/dephosphorylation. This Sinorhizobium medicae (strain WSM419) (Ensifer medicae) protein is Putative pyruvate, phosphate dikinase regulatory protein.